Consider the following 707-residue polypeptide: Polyribonucleotide nucleotidyltransferase (707 aa).

Residues aspartate 486 and aspartate 492 each coordinate Mg(2+). Residues 553–612 (PRIHTIKINPEKIKDVIGKGGSVIRALTEETGTTIEIEDDGTVKIAATDGDKAKHAIRRI) enclose the KH domain. The region spanning 622-690 (GRIYQGKVTR…RQGRVRLSIK (69 aa)) is the S1 motif domain.

The protein belongs to the polyribonucleotide nucleotidyltransferase family. As to quaternary structure, component of the RNA degradosome, which is a multiprotein complex involved in RNA processing and mRNA degradation. Mg(2+) serves as cofactor.

The protein localises to the cytoplasm. It carries out the reaction RNA(n+1) + phosphate = RNA(n) + a ribonucleoside 5'-diphosphate. Involved in mRNA degradation. Catalyzes the phosphorolysis of single-stranded polyribonucleotides processively in the 3'- to 5'-direction. The polypeptide is Polyribonucleotide nucleotidyltransferase (Edwardsiella ictaluri (strain 93-146)).